A 390-amino-acid polypeptide reads, in one-letter code: Chalcone synthase (390 aa).

Cys-164 is a catalytic residue.

Belongs to the thiolase-like superfamily. Chalcone/stilbene synthases family.

The catalysed reaction is (E)-4-coumaroyl-CoA + 3 malonyl-CoA + 3 H(+) = 2',4,4',6'-tetrahydroxychalcone + 3 CO2 + 4 CoA. It functions in the pathway secondary metabolite biosynthesis; flavonoid biosynthesis. In terms of biological role, the primary product of this enzyme is 4,2',4',6'-tetrahydroxychalcone (also termed naringenin-chalcone or chalcone) which can under specific conditions spontaneously isomerize into naringenin. This chain is Chalcone synthase (CHS), found in Antirrhinum majus (Garden snapdragon).